We begin with the raw amino-acid sequence, 1193 residues long: Probable cation-transporting ATPase 13A4 (1193 aa).

At 1–32 (MGDHLEKSQHALLNEGDENEMEIFGYRTQGCR) the chain is on the cytoplasmic side. The stretch at 33 to 53 (KALCLIGSIFSLGMLPLVFYW) is an intramembrane region. Topologically, residues 54–198 (RPAWRVWANC…DVEITPIWKL (145 aa)) are cytoplasmic. Residues 199 to 219 (LIKEVLNPFYIFQLFSVCLWF) form a helical membrane-spanning segment. The Lumenal segment spans residues 220-224 (SEDYK). The helical transmembrane segment at 225–245 (EYALAIILMSVISIALTVYDL) threads the bilayer. The Cytoplasmic portion of the chain corresponds to 246 to 401 (RQQSVKLHHL…NFKLYRDAIR (156 aa)). A helical membrane pass occupies residues 402–422 (FLLCLVGTATIGMVYTLCVYV). Topologically, residues 423–437 (LSGEPPEEVVRKALD) are lumenal. A helical transmembrane segment spans residues 438 to 458 (VITIAVPPALPAALTTGIIYA). Over 459–901 (QRRLKKKGIF…KEGRAALVTS (443 aa)) the chain is Cytoplasmic. Aspartate 487 (4-aspartylphosphate intermediate) is an active-site residue. Residues aspartate 849 and aspartate 853 each coordinate Mg(2+). The chain crosses the membrane as a helical span at residues 902–922 (FCMFKYMALYSMIQYVGVLLL). Residues 923–933 (YWKTNSLSNYQ) are Lumenal-facing. Residues 934–954 (FLFQDLAITTLIGVTMNLNGA) traverse the membrane as a helical segment. At 955–973 (NPKLVPFRPAGRLISPPLL) the chain is on the cytoplasmic side. A helical membrane pass occupies residues 974–994 (LSVVLNILLSLAMHIVGFILV). The Lumenal segment spans residues 995 to 1036 (QKQPWYIMDYHSVCPVRNESASALAASPSVPEKTRSNSTFAS). Residues 1037–1057 (FENTTIWFLGTINCIFVALVF) form a helical membrane-spanning segment. The Cytoplasmic portion of the chain corresponds to 1058 to 1071 (SKGKPFRQPTYTNY). Residues 1072–1092 (IFVLVLILQMGVCLFILFADI) traverse the membrane as a helical segment. The Lumenal portion of the chain corresponds to 1093 to 1105 (PEMHRRLDLLCTP). A helical transmembrane segment spans residues 1106–1126 (VLWRVYILIMISSNFVVSLAV). Residues 1127-1193 (EKAIIENRAL…PVFESNEEQL (67 aa)) lie on the Cytoplasmic side of the membrane.

This sequence belongs to the cation transport ATPase (P-type) (TC 3.A.3) family. Type V subfamily. Expressed in brain and stomach.

Its subcellular location is the early endosome membrane. The protein localises to the late endosome membrane. It localises to the recycling endosome membrane. The enzyme catalyses ATP + H2O = ADP + phosphate + H(+). The polypeptide is Probable cation-transporting ATPase 13A4 (Atp13a4) (Mus musculus (Mouse)).